Consider the following 170-residue polypeptide: Ubiquinone/menaquinone biosynthesis C-methyltransferase UbiE (170 aa).

Over residues 1–12 (MNDQRKGDHAEP) the composition is skewed to basic and acidic residues. Positions 1 to 22 (MNDQRKGDHAEPTTHFGYQDVP) are disordered.

It belongs to the class I-like SAM-binding methyltransferase superfamily. MenG/UbiE family.

It carries out the reaction a 2-demethylmenaquinol + S-adenosyl-L-methionine = a menaquinol + S-adenosyl-L-homocysteine + H(+). The catalysed reaction is a 2-methoxy-6-(all-trans-polyprenyl)benzene-1,4-diol + S-adenosyl-L-methionine = a 5-methoxy-2-methyl-3-(all-trans-polyprenyl)benzene-1,4-diol + S-adenosyl-L-homocysteine + H(+). It participates in quinol/quinone metabolism; menaquinone biosynthesis; menaquinol from 1,4-dihydroxy-2-naphthoate: step 2/2. It functions in the pathway cofactor biosynthesis; ubiquinone biosynthesis. Functionally, methyltransferase required for the conversion of demethylmenaquinol (DMKH2) to menaquinol (MKH2) and the conversion of 2-polyprenyl-6-methoxy-1,4-benzoquinol (DDMQH2) to 2-polyprenyl-3-methyl-6-methoxy-1,4-benzoquinol (DMQH2). The polypeptide is Ubiquinone/menaquinone biosynthesis C-methyltransferase UbiE (ubiE) (Ectopseudomonas oleovorans (Pseudomonas oleovorans)).